Here is a 598-residue protein sequence, read N- to C-terminus: Pantothenate kinase 1 (598 aa).

The tract at residues 32-161 (ARPGDQGKAG…SPGAPVGTSA (130 aa)) is disordered. Positions 38-49 (GKAGGGSPGWGC) are enriched in gly residues. A Phosphoserine modification is found at S215. The Nucleolar localization signal motif lies at 218 to 235 (KKCRLRRRMDSGRKNRPP). The Proton acceptor role is filled by E363. The acetyl-CoA site is built by S417, S420, and R432.

Belongs to the type II pantothenate kinase family. As to quaternary structure, homodimer. As to expression, expressed at high levels in brain, heart, kidney, liver, skeletal muscle and testis. In terms of tissue distribution, detected at much lower levels in kidney, liver, brain and testis and not detected in heart or skeletal muscle.

It localises to the cytoplasm. It is found in the nucleus. The protein resides in the nucleolus. The protein localises to the cytosol. Its subcellular location is the cytoplasmic vesicle. It localises to the clathrin-coated vesicle. It is found in the recycling endosome. The enzyme catalyses (R)-pantothenate + ATP = (R)-4'-phosphopantothenate + ADP + H(+). Its pathway is cofactor biosynthesis; coenzyme A biosynthesis; CoA from (R)-pantothenate: step 1/5. With respect to regulation, regulated by feedback inhibition by CoA and its thioesters. Functionally, catalyzes the phosphorylation of pantothenate to generate 4'-phosphopantothenate in the first and rate-determining step of coenzyme A (CoA) synthesis. This chain is Pantothenate kinase 1 (PANK1), found in Homo sapiens (Human).